The sequence spans 305 residues: Putative S-adenosyl-L-methionine-dependent methyltransferase Mvan_1344 (305 aa).

S-adenosyl-L-methionine is bound by residues aspartate 130 and 159–160; that span reads DL.

Belongs to the UPF0677 family.

In terms of biological role, exhibits S-adenosyl-L-methionine-dependent methyltransferase activity. This chain is Putative S-adenosyl-L-methionine-dependent methyltransferase Mvan_1344, found in Mycolicibacterium vanbaalenii (strain DSM 7251 / JCM 13017 / BCRC 16820 / KCTC 9966 / NRRL B-24157 / PYR-1) (Mycobacterium vanbaalenii).